A 688-amino-acid polypeptide reads, in one-letter code: Glycine--tRNA ligase beta subunit (688 aa).

The protein belongs to the class-II aminoacyl-tRNA synthetase family. As to quaternary structure, tetramer of two alpha and two beta subunits.

Its subcellular location is the cytoplasm. It carries out the reaction tRNA(Gly) + glycine + ATP = glycyl-tRNA(Gly) + AMP + diphosphate. The polypeptide is Glycine--tRNA ligase beta subunit (Vibrio atlanticus (strain LGP32) (Vibrio splendidus (strain Mel32))).